Reading from the N-terminus, the 536-residue chain is Protein GvpD1 (536 aa).

Residue Gly-39–Thr-46 coordinates ATP. The tract at residues Gly-352 to Asp-413 is disordered. The segment covering Pro-363 to Met-372 has biased composition (polar residues). A compositionally biased stretch (low complexity) spans Ala-373 to Thr-385. Residues His-386–Arg-396 show a composition bias toward basic and acidic residues.

This sequence belongs to the gas vesicle GvpD family. As to quaternary structure, interacts with GvpE.

The protein resides in the cytoplasm. Functionally, causes a decrease in the amount of GvpE protein. The 5'-region of its promoter or mRNA has a repressive function on downstream genes. Gas vesicles are hollow, gas filled proteinaceous nanostructures found in several microbial planktonic microorganisms. They allow positioning of halobacteria at the optimal depth for growth in the poorly aerated, shallow brine pools of their habitat. Its function is as follows. Expression of a 9.5 kb p-vac DNA fragment containing 2 divergently transcribed regions (gvpD-gvpE-gvpF-gvpG-gvpH-gvpI-gvpJ-gvpK-gvpL-gvpM and gvpA-gvpC-gvpN-gvpO) allows H.volcanii to produce gas vesicles. A similar region restores gas vesicle production in H.halobium without the p-vac locus, but it still has the c-vac locus. The protein is Protein GvpD1 (gvpD11) of Halobacterium salinarum (strain ATCC 700922 / JCM 11081 / NRC-1) (Halobacterium halobium).